The following is a 573-amino-acid chain: DEAD-box ATP-dependent RNA helicase 47A (573 aa).

The short motif at 131-159 (KSFEELGLPPLLIDRLNKEGLTAPTEVQS) is the Q motif element. The Helicase ATP-binding domain occupies 162-362 (IPIISQKHDA…RSWGHDPVLV (201 aa)). Position 175 to 182 (175 to 182 (SYTGSGKT)) interacts with ATP. Residues 293–296 (DEVD) carry the DEAD box motif. The Helicase C-terminal domain occupies 421-565 (TLRRCIHALE…PCEFTEGKLL (145 aa)).

It belongs to the DEAD box helicase family.

It catalyses the reaction ATP + H2O = ADP + phosphate + H(+). This chain is DEAD-box ATP-dependent RNA helicase 47A, found in Oryza sativa subsp. japonica (Rice).